The primary structure comprises 235 residues: Dephospho-CoA kinase (235 aa).

A DPCK domain is found at 15–219 (NVGLTGSISC…KKERLQRKSA (205 aa)). Position 23–28 (23–28 (SCGKST)) interacts with ATP.

It belongs to the CoaE family.

Its subcellular location is the cytoplasm. The catalysed reaction is 3'-dephospho-CoA + ATP = ADP + CoA + H(+). It functions in the pathway cofactor biosynthesis; coenzyme A biosynthesis; CoA from (R)-pantothenate: step 5/5. Its function is as follows. Catalyzes the phosphorylation of the 3'-hydroxyl group of dephosphocoenzyme A to form coenzyme A. The protein is Dephospho-CoA kinase of Syntrophus aciditrophicus (strain SB).